Consider the following 317-residue polypeptide: Nitrilase (317 aa).

In terms of domain architecture, CN hydrolase spans 5–280 (VKVAVVQAEP…DGVIISELDM (276 aa)). Glutamate 45 functions as the Proton acceptor in the catalytic mechanism. The active site involves lysine 125. The Nucleophile role is filled by cysteine 165.

The protein belongs to the carbon-nitrogen hydrolase superfamily. Nitrilase family.

It catalyses the reaction a nitrile + 2 H2O = a carboxylate + NH4(+). Its function is as follows. Nitrilase that hydrolyzes preferentially 4-cyanopyridine. Is also able to hydrolyze some aliphatic nitriles, such as phenylacetonitrile. The sequence is that of Nitrilase from Meyerozyma guilliermondii (strain ATCC 6260 / CBS 566 / DSM 6381 / JCM 1539 / NBRC 10279 / NRRL Y-324) (Yeast).